Reading from the N-terminus, the 154-residue chain is Large ribosomal subunit protein uL23y (154 aa).

The protein belongs to the universal ribosomal protein uL23 family.

In terms of biological role, binds to a specific region on the 26S rRNA. This Arabidopsis thaliana (Mouse-ear cress) protein is Large ribosomal subunit protein uL23y (RPL23AB).